Consider the following 206-residue polypeptide: MVSGSGICAKEVVVDARHHMLGRLASILAKELLHGQRVVVVRCEEICMSGGLVRQKMKYLRFLRKRMNTKPSHGPIHFRAPSRILWRTIRGMIPHKTKRGAAALATLRAFEGVPPPYDRKKRMVIPDALKVLRLQPGHKYCLLGRLSKEVGWHHFDTITELEEKRKAKAQVSYERRKQLAKLRSKAVELAEKQLAPEMELLASLKY.

It belongs to the universal ribosomal protein uL13 family.

This chain is Large ribosomal subunit protein uL13 (RPL13A), found in Picea mariana (Black spruce).